Consider the following 350-residue polypeptide: S-adenosylmethionine:tRNA ribosyltransferase-isomerase (350 aa).

It belongs to the QueA family. Monomer.

Its subcellular location is the cytoplasm. The enzyme catalyses 7-aminomethyl-7-carbaguanosine(34) in tRNA + S-adenosyl-L-methionine = epoxyqueuosine(34) in tRNA + adenine + L-methionine + 2 H(+). The protein operates within tRNA modification; tRNA-queuosine biosynthesis. Functionally, transfers and isomerizes the ribose moiety from AdoMet to the 7-aminomethyl group of 7-deazaguanine (preQ1-tRNA) to give epoxyqueuosine (oQ-tRNA). This Bacillus cytotoxicus (strain DSM 22905 / CIP 110041 / 391-98 / NVH 391-98) protein is S-adenosylmethionine:tRNA ribosyltransferase-isomerase.